A 232-amino-acid polypeptide reads, in one-letter code: Thiamine import ATP-binding protein ThiQ (232 aa).

One can recognise an ABC transporter domain in the interval leucine 2 to isoleucine 230. Residue glycine 32–serine 39 coordinates ATP.

It belongs to the ABC transporter superfamily. Thiamine importer (TC 3.A.1.19.1) family. As to quaternary structure, the complex is composed of two ATP-binding proteins (ThiQ), two transmembrane proteins (ThiP) and a solute-binding protein (ThiB).

It is found in the cell inner membrane. The catalysed reaction is thiamine(out) + ATP + H2O = thiamine(in) + ADP + phosphate + H(+). Functionally, part of the ABC transporter complex ThiBPQ involved in thiamine import. Responsible for energy coupling to the transport system. This chain is Thiamine import ATP-binding protein ThiQ, found in Escherichia coli O157:H7.